Here is a 275-residue protein sequence, read N- to C-terminus: MAALRRALIILAHSEKTSFNYAMKEAAVEALQRKGWEVAVSDLYAMKFDPIISRKDITGALKDPENFQYPAESALAYKESRLSPDIVTEQKKVEEADLLIFQFPLQWFGVPAILKGWFERVFTGGFAYTYAAMYDKGPFQNKKAVLSITTGGSESMYSLKGIHGDMNIILWPIQSGTLHFCGFQVLEPQLTYGIGHTPPDVRTEILAGWKKRLENIWDETPLYFAPSSLFDLNFQAGFLLKKEIEDEQKNNKYGLSVGHHLGKPIPTDNQIKARK.

FAD contacts are provided by residues histidine 13, phenylalanine 19 to asparagine 20, and glutamine 68. A Phosphoserine modification is found at serine 83. Residue leucine 105–phenylalanine 108 coordinates FAD. Alanine 127 to threonine 129 lines the substrate pocket. FAD contacts are provided by residues threonine 149–glycine 152, tyrosine 157, and arginine 202. The segment at proline 226–lysine 275 is important for apoenzyme conformational stability. Residue lysine 252 forms a Glycyl lysine isopeptide (Lys-Gly) (interchain with G-Cter in SUMO2) linkage.

The protein belongs to the NAD(P)H dehydrogenase (quinone) family. Homodimer. Interacts with PDLIM4 isoform 2; this interaction stabilizes PDLIM4 isoform 2 in response to oxidative stress and protects it from ubiquitin-independent degradation by the core 20S proteasome. Interacts with TP73 (via SAM domain); this interaction is NADH-dependent, stabilizes TP73 in response to oxidative stress and protects it from ubiquitin-independent degradation by the 20S proteasome. Interacts with TP53; this interaction is NADH-dependent, stabilizes TP53 in response to oxidative stress and protects it from ubiquitin-independent degradation by the 20S proteasome. Requires FAD as cofactor.

The protein localises to the cytoplasm. It is found in the cytosol. It catalyses the reaction a quinone + NADH + H(+) = a quinol + NAD(+). The enzyme catalyses a quinone + NADPH + H(+) = a quinol + NADP(+). It carries out the reaction ubiquinone-10 + NADH + H(+) = ubiquinol-10 + NAD(+). The catalysed reaction is menadione + NADH + H(+) = menadiol + NAD(+). Flavin-containing quinone reductase that catalyzes two-electron reduction of quinones to hydroquinones using either NADH or NADPH as electron donors. In a ping-pong kinetic mechanism, the electrons are sequentially transferred from NAD(P)H to flavin cofactor and then from reduced flavin to the quinone, bypassing the formation of semiquinone and reactive oxygen species. Regulates cellular redox state primarily through quinone detoxification. Reduces components of plasma membrane redox system such as coenzyme Q and vitamin quinones, producing antioxidant hydroquinone forms. In the process may function as superoxide scavenger to prevent hydroquinone oxidation and facilitate excretion. Alternatively, can activate quinones and their derivatives by generating redox reactive hydroquinones with DNA cross-linking antitumor potential. Acts as a gatekeeper of the core 20S proteasome known to degrade proteins with unstructured regions. Upon oxidative stress, interacts with tumor suppressors TP53 and TP73 in a NADH-dependent way and inhibits their ubiquitin-independent degradation by the 20S proteasome. This chain is NAD(P)H dehydrogenase [quinone] 1 (NQO1), found in Cavia porcellus (Guinea pig).